Consider the following 282-residue polypeptide: tRNA pseudouridine synthase B (282 aa).

Asp-36 serves as the catalytic Nucleophile.

The protein belongs to the pseudouridine synthase TruB family. Type 1 subfamily.

It catalyses the reaction uridine(55) in tRNA = pseudouridine(55) in tRNA. In terms of biological role, responsible for synthesis of pseudouridine from uracil-55 in the psi GC loop of transfer RNAs. This chain is tRNA pseudouridine synthase B, found in Mycoplasmopsis pulmonis (strain UAB CTIP) (Mycoplasma pulmonis).